The chain runs to 56 residues: Serine protease inhibitor Kazal-type 1 (56 aa).

The Kazal-like domain maps to 3–56; the sequence is PQREATCTSEVSGCPKIYNPVCGTDGITYSNECVLCSENKKRQTPVLIQKSGPC. Disulfide bonds link Cys-9–Cys-38, Cys-16–Cys-35, and Cys-24–Cys-56.

It is found in the secreted. In terms of biological role, serine protease inhibitor which exhibits anti-trypsin activity. In the pancreas, protects against trypsin-catalyzed premature activation of zymogens. In the male reproductive tract, binds to sperm heads where it modulates sperm capacitance by inhibiting calcium uptake and nitrogen oxide (NO) production. The polypeptide is Serine protease inhibitor Kazal-type 1 (SPINK1) (Sus scrofa (Pig)).